The following is a 118-amino-acid chain: UPF0295 protein BA_0538/GBAA_0538/BAS0506 (118 aa).

The next 2 membrane-spanning stretches (helical) occupy residues 12–32 (IRTF…LGVF) and 43–63 (FMMV…WIGM).

The protein belongs to the UPF0295 family.

Its subcellular location is the cell membrane. The protein is UPF0295 protein BA_0538/GBAA_0538/BAS0506 of Bacillus anthracis.